The following is a 343-amino-acid chain: Ribosomal RNA small subunit methyltransferase C (343 aa).

Belongs to the methyltransferase superfamily. RsmC family. In terms of assembly, monomer.

It localises to the cytoplasm. It carries out the reaction guanosine(1207) in 16S rRNA + S-adenosyl-L-methionine = N(2)-methylguanosine(1207) in 16S rRNA + S-adenosyl-L-homocysteine + H(+). Functionally, specifically methylates the guanine in position 1207 of 16S rRNA in the 30S particle. This Shigella flexneri protein is Ribosomal RNA small subunit methyltransferase C.